The chain runs to 371 residues: DNA replication and repair protein RecF (371 aa).

30 to 37 (GANAQGKT) provides a ligand contact to ATP.

This sequence belongs to the RecF family.

It is found in the cytoplasm. Functionally, the RecF protein is involved in DNA metabolism; it is required for DNA replication and normal SOS inducibility. RecF binds preferentially to single-stranded, linear DNA. It also seems to bind ATP. This Lacticaseibacillus casei (strain BL23) (Lactobacillus casei) protein is DNA replication and repair protein RecF.